The chain runs to 80 residues: MKLTCMMIVAVLFLTAWTFATADDPRNRLENFFSKTQHEMKNPEASKLNKRCIAESEPCNIITQNCCDGKCLFFCIQIPE.

The N-terminal stretch at 1–22 is a signal peptide; sequence MKLTCMMIVAVLFLTAWTFATA. Positions 23–49 are excised as a propeptide; it reads DDPRNRLENFFSKTQHEMKNPEASKLN. Cystine bridges form between cysteine 52–cysteine 67, cysteine 59–cysteine 71, and cysteine 66–cysteine 75.

Belongs to the conotoxin O1 superfamily. Expressed by the venom duct.

It localises to the secreted. The polypeptide is Conotoxin PnMKLT1-0121 (Conus pennaceus (Feathered cone)).